The following is a 218-amino-acid chain: GTP cyclohydrolase 1 (218 aa).

Zn(2+)-binding residues include cysteine 109, histidine 112, and cysteine 180.

It belongs to the GTP cyclohydrolase I family. As to quaternary structure, toroid-shaped homodecamer, composed of two pentamers of five dimers.

The enzyme catalyses GTP + H2O = 7,8-dihydroneopterin 3'-triphosphate + formate + H(+). It functions in the pathway cofactor biosynthesis; 7,8-dihydroneopterin triphosphate biosynthesis; 7,8-dihydroneopterin triphosphate from GTP: step 1/1. In Histophilus somni (strain 129Pt) (Haemophilus somnus), this protein is GTP cyclohydrolase 1.